The chain runs to 567 residues: DNA ligase B (567 aa).

Residue lysine 132 is the N6-AMP-lysine intermediate of the active site.

This sequence belongs to the NAD-dependent DNA ligase family. LigB subfamily.

It catalyses the reaction NAD(+) + (deoxyribonucleotide)n-3'-hydroxyl + 5'-phospho-(deoxyribonucleotide)m = (deoxyribonucleotide)n+m + AMP + beta-nicotinamide D-nucleotide.. In terms of biological role, catalyzes the formation of phosphodiester linkages between 5'-phosphoryl and 3'-hydroxyl groups in double-stranded DNA using NAD as a coenzyme and as the energy source for the reaction. The sequence is that of DNA ligase B from Yersinia pestis.